Consider the following 144-residue polypeptide: Large ribosomal subunit protein uL15 (144 aa).

Positions 1–52 (MIKLESLQDPSPRKRRKKLLGRGPGSGHGKTSGRGHKGDGSRSGYKRRFGYE) are disordered. The segment covering 22–32 (RGPGSGHGKTS) has biased composition (gly residues).

This sequence belongs to the universal ribosomal protein uL15 family. As to quaternary structure, part of the 50S ribosomal subunit.

Functionally, binds to the 23S rRNA. This Chlamydia felis (strain Fe/C-56) (Chlamydophila felis) protein is Large ribosomal subunit protein uL15.